The primary structure comprises 195 residues: Ribonuclease HII (195 aa).

The RNase H type-2 domain occupies 1–195 (MICGIDEAGR…SWRTLRYLNT (195 aa)). Residues aspartate 6, glutamate 7, and aspartate 101 each contribute to the a divalent metal cation site.

The protein belongs to the RNase HII family. The cofactor is Mn(2+). Mg(2+) serves as cofactor.

It localises to the cytoplasm. The enzyme catalyses Endonucleolytic cleavage to 5'-phosphomonoester.. Its function is as follows. Endonuclease that specifically degrades the RNA of RNA-DNA hybrids. This Pyrobaculum islandicum (strain DSM 4184 / JCM 9189 / GEO3) protein is Ribonuclease HII.